The primary structure comprises 676 residues: Probable metal-nicotianamine transporter YSL6 (676 aa).

Transmembrane regions (helical) follow at residues Ile-38–His-58, Leu-62–Val-82, Cys-110–Met-130, Gly-154–Val-174, Ile-276–Val-296, Val-321–Ala-341, Phe-392–Phe-412, Pro-413–Cys-433, Ile-452–Ala-472, Val-510–Phe-530, Leu-561–Leu-581, Phe-604–Trp-624, and Val-639–Ile-659.

This sequence belongs to the YSL (TC 2.A.67.2) family.

The protein localises to the membrane. Its function is as follows. May be involved in the transport of nicotianamine-chelated metals. In Arabidopsis thaliana (Mouse-ear cress), this protein is Probable metal-nicotianamine transporter YSL6 (YSL6).